The chain runs to 273 residues: MESNVPKRKEPLKSLRIKVISMGNAEVGKSCIIKRYCEKRFVSKYLATIGIDYGVTKVQVRDREIKVNIFDMAGHPFFFEVRNEFYKDTQGVILVYDVGQKDSFDALDSWLAEMKQELGPHGNMENIVFVVCANKIDCSKHRCIDESEGRLWAESRGFLYFETSAQTGEGINEMFQTFYMSIVDLCENGGKRPTANSSASYTKEQADTIRRIRTSKDSWEMLGVRPGASREEVNKAYRKLAVLLHPDKCVAPGSEDAFKAVVNARTALLKNIK.

The required for interaction with MAPK1 stretch occupies residues 1 to 18 (MESNVPKRKEPLKSLRIK). GTP-binding positions include 23–30 (GNAEVGKS), 71–75 (DMAGH), and 134–137 (NKID). The 57-residue stretch at 217-273 (DSWEMLGVRPGASREEVNKAYRKLAVLLHPDKCVAPGSEDAFKAVVNARTALLKNIK) folds into the J domain.

It belongs to the small GTPase superfamily. Rab family. In terms of assembly, interacts directly with MAPK1 (wild-type and kinase-deficient forms). Interacts directly (in GTP-bound form) with MAP2K1 (wild-type and kinase-deficient forms).

It is found in the nucleus. Functionally, GTPase which can activate the MEK/ERK pathway and induce cell transformation when overexpressed. May act as a nuclear scaffold for MAPK1, probably by association with MAPK1 nuclear export signal leading to enhanced ERK1/ERK2 signaling. In Rattus norvegicus (Rat), this protein is DnaJ homolog subfamily C member 27 (Dnajc27).